The sequence spans 252 residues: Indole-3-glycerol phosphate synthase (252 aa).

It belongs to the TrpC family.

It catalyses the reaction 1-(2-carboxyphenylamino)-1-deoxy-D-ribulose 5-phosphate + H(+) = (1S,2R)-1-C-(indol-3-yl)glycerol 3-phosphate + CO2 + H2O. The protein operates within amino-acid biosynthesis; L-tryptophan biosynthesis; L-tryptophan from chorismate: step 4/5. In Leptospira interrogans serogroup Icterohaemorrhagiae serovar copenhageni (strain Fiocruz L1-130), this protein is Indole-3-glycerol phosphate synthase.